The following is an 846-amino-acid chain: MAP7 domain-containing protein 1 (846 aa).

2 disordered regions span residues 1-153 (MESG…ERAK) and 186-210 (EQRL…EKNK). Pro residues predominate over residues 24–41 (EPRPSPEGDPSPPPPPTP). Thr49 and Thr53 each carry phosphothreonine. Ser95 is subject to Phosphoserine. Thr99 bears the Phosphothreonine mark. Positions 113–123 (RSSQPSPTTVP) are enriched in low complexity. 2 positions are modified to phosphoserine: Ser115 and Ser118. Residue Thr120 is modified to Phosphothreonine. Residues Ser125 and Ser127 each carry the phosphoserine modification. A coiled-coil region spans residues 130 to 224 (AKQDVKKAGE…AAIQRSVKKT (95 aa)). Over residues 132-153 (QDVKKAGERHKLAKERREERAK) the composition is skewed to basic and acidic residues. 5 positions are modified to phosphoserine: Ser256, Ser275, Ser315, Ser368, and Ser401. A disordered region spans residues 318-816 (TLPRNGRDQG…KGTAGDKSLG (499 aa)). The segment covering 407–437 (RRLEATPVQKKEKKDKERENEKEKSALARER) has biased composition (basic and acidic residues). A coiled-coil region spans residues 414–443 (VQKKEKKDKERENEKEKSALARERNLKKRQ). 4 positions are modified to phosphoserine: Ser444, Ser448, Ser454, and Ser460. Residues 460–471 (SPKSKARPSSPS) are compositionally biased toward low complexity. Lys462 is covalently cross-linked (Glycyl lysine isopeptide (Lys-Gly) (interchain with G-Cter in SUMO2)). Phosphoserine is present on residues Ser479 and Ser496. A compositionally biased stretch (pro residues) spans 479 to 497 (SPCPSPGPGHALPPKPPSP). A compositionally biased stretch (basic and acidic residues) spans 523 to 539 (PEDKNHRKSRAAEEKEP). Residues 542-556 (PASPAPSPVPSPTPA) are compositionally biased toward pro residues. Phosphoserine occurs at positions 544, 548, and 552. Thr554 is modified (phosphothreonine). Positions 568-579 (PAETAVPAVPAA) are enriched in low complexity. Residues 599-740 (TTDREEATRL…AETKKQDAKE (142 aa)) are a coiled coil. A compositionally biased stretch (basic and acidic residues) spans 600–740 (TDREEATRLL…AETKKQDAKE (141 aa)). Position 818 is a phosphothreonine (Thr818).

Belongs to the MAP7 family.

It localises to the cytoplasm. Its subcellular location is the cytoskeleton. It is found in the spindle. The protein localises to the microtubule organizing center. The protein resides in the centrosome. It localises to the midbody. Functionally, microtubule-stabilizing protein involved in the control of cell motility and neurite outgrowth. Facilitate microtubule stabilization through the maintenance of acetylated stable microtubules. The polypeptide is MAP7 domain-containing protein 1 (Map7d1) (Mus musculus (Mouse)).